A 124-amino-acid polypeptide reads, in one-letter code: Protein MGF 110-8L (124 aa).

Residues 1-16 (MKVLILVLLGVVILQA) form the signal peptide. Residue asparagine 76 is glycosylated (N-linked (GlcNAc...) asparagine; by host).

The protein belongs to the asfivirus MGF 110 family.

Its function is as follows. Plays a role in virus cell tropism, and may be required for efficient virus replication in macrophages. In African swine fever virus (isolate Pig/Kenya/KEN-50/1950) (ASFV), this protein is Protein MGF 110-8L.